A 133-amino-acid polypeptide reads, in one-letter code: Ribosome-binding factor A (133 aa).

It belongs to the RbfA family. As to quaternary structure, monomer. Binds 30S ribosomal subunits, but not 50S ribosomal subunits or 70S ribosomes.

The protein localises to the cytoplasm. One of several proteins that assist in the late maturation steps of the functional core of the 30S ribosomal subunit. Associates with free 30S ribosomal subunits (but not with 30S subunits that are part of 70S ribosomes or polysomes). Required for efficient processing of 16S rRNA. May interact with the 5'-terminal helix region of 16S rRNA. The protein is Ribosome-binding factor A of Chelativorans sp. (strain BNC1).